A 93-amino-acid chain; its full sequence is U12-lycotoxin-Ls1c (93 aa).

The N-terminal stretch at 1–18 (MKFAVILLFSLVVLAVAS) is a signal peptide. Residues 19–38 (ESVEEVRREIDIEDLPEQQR) constitute a propeptide that is removed on maturation.

The protein belongs to the neurotoxin 31 family. Post-translationally, contains 5 disulfide bonds. Expressed by the venom gland.

It is found in the secreted. The chain is U12-lycotoxin-Ls1c from Lycosa singoriensis (Wolf spider).